A 204-amino-acid polypeptide reads, in one-letter code: Transcriptional regulator GfcR 1 (204 aa).

Belongs to the purine/pyrimidine phosphoribosyltransferase family. GfcR subfamily.

This is Transcriptional regulator GfcR 1 from Methanosarcina barkeri (strain Fusaro / DSM 804).